The chain runs to 288 residues: PAK4-inhibitor inka2 (288 aa).

The interval 159–196 is inka box; sequence DPTDWTTSLLTRGRNRQPLVLGDNSFADLIKNWMDLPE.

It belongs to the INKA family.

It is found in the nucleus. Inhibitor of the serine/threonine-protein kinase pak4/pak5. Acts by binding pak4/pak5 in a substrate-like manner, inhibiting the protein kinase activity. The sequence is that of PAK4-inhibitor inka2 from Danio rerio (Zebrafish).